A 321-amino-acid polypeptide reads, in one-letter code: GTP 3',8-cyclase (321 aa).

Residues S5 to E233 form the Radical SAM core domain. R14 is a GTP binding site. Positions 21 and 25 each coordinate [4Fe-4S] cluster. Y27 lines the S-adenosyl-L-methionine pocket. C28 lines the [4Fe-4S] cluster pocket. R64 provides a ligand contact to GTP. G68 contributes to the S-adenosyl-L-methionine binding site. S95 is a binding site for GTP. Residue S119 participates in S-adenosyl-L-methionine binding. K155 is a binding site for GTP. M189 is a binding site for S-adenosyl-L-methionine. [4Fe-4S] cluster contacts are provided by C249 and C252. R254–R256 provides a ligand contact to GTP. C266 provides a ligand contact to [4Fe-4S] cluster.

This sequence belongs to the radical SAM superfamily. MoaA family. Monomer and homodimer. [4Fe-4S] cluster serves as cofactor.

It catalyses the reaction GTP + AH2 + S-adenosyl-L-methionine = (8S)-3',8-cyclo-7,8-dihydroguanosine 5'-triphosphate + 5'-deoxyadenosine + L-methionine + A + H(+). It functions in the pathway cofactor biosynthesis; molybdopterin biosynthesis. In terms of biological role, catalyzes the cyclization of GTP to (8S)-3',8-cyclo-7,8-dihydroguanosine 5'-triphosphate. In Helicobacter pylori (strain ATCC 700392 / 26695) (Campylobacter pylori), this protein is GTP 3',8-cyclase.